The sequence spans 438 residues: Glycerol-3-phosphate acyltransferase 3 (438 aa).

Residues 14–34 traverse the membrane as a helical segment; it reads WLTLVGGLILLPSAFGLSLGI. Residues Ser-68 and Ser-77 each carry the phosphoserine modification. Helical transmembrane passes span 137–157 and 161–181; these read ISPRLTMVWVLGVLVRYCFLL and VTLAFIGISLLIIGTTLVGQL. The HXXXXD motif signature appears at 229-234; that stretch reads HTSPID.

Belongs to the 1-acyl-sn-glycerol-3-phosphate acyltransferase family. As to expression, most abundant in epididymal fat, followed by small intestine, brown adipose tissue, kidney, heart and colon.

It localises to the endoplasmic reticulum membrane. The catalysed reaction is sn-glycerol 3-phosphate + an acyl-CoA = a 1-acyl-sn-glycero-3-phosphate + CoA. The enzyme catalyses a 1-acyl-sn-glycero-3-phosphate + an acyl-CoA = a 1,2-diacyl-sn-glycero-3-phosphate + CoA. It carries out the reaction dodecanoyl-CoA + sn-glycerol 3-phosphate = 1-dodecanoyl-sn-glycerol 3-phosphate + CoA. It catalyses the reaction sn-glycerol 3-phosphate + hexadecanoyl-CoA = 1-hexadecanoyl-sn-glycero-3-phosphate + CoA. The catalysed reaction is sn-glycerol 3-phosphate + (9Z)-octadecenoyl-CoA = 1-(9Z-octadecenoyl)-sn-glycero-3-phosphate + CoA. The enzyme catalyses (9Z,12Z)-octadecadienoyl-CoA + sn-glycerol 3-phosphate = 1-(9Z,12Z)-octadecadienoyl-sn-glycero-3-phosphate + CoA. It carries out the reaction 1-tetradecanoyl-sn-glycerol 3-phosphate + (9Z)-octadecenoyl-CoA = 1-tetradecanoyl-2-(9Z)-octadecenoyl-sn-glycero-3-phosphate + CoA. It catalyses the reaction 1-hexadecanoyl-sn-glycero-3-phosphate + (9Z)-octadecenoyl-CoA = 1-hexadecanoyl-2-(9Z-octadecenoyl)-sn-glycero-3-phosphate + CoA. The catalysed reaction is 1-(9Z-octadecenoyl)-sn-glycero-3-phosphate + (9Z)-octadecenoyl-CoA = 1,2-di-(9Z-octadecenoyl)-sn-glycero-3-phosphate + CoA. The enzyme catalyses 1-(6Z,9Z,12Z-octadecatrienoyl)-sn-glycero-3-phosphate + (9Z)-octadecenoyl-CoA = (6Z,9Z,12Z)-octadecatrienoyl-2-(9Z)-octadecenoyl-sn-glycero-3-phosphate + CoA. It carries out the reaction 1-(9Z,12Z,15Z)-octadecatrienoyl-sn-glycero-3-phosphate + (9Z)-octadecenoyl-CoA = 1-(9Z,12Z,15Z)-octadecatrienoyl-2-(9Z)-octadecenoyl-sn-glycero-3-phosphate + CoA. It catalyses the reaction 1-(9Z-octadecenoyl)-sn-glycero-3-phosphate + tetradecanoyl-CoA = 1-(9Z)-octadecenoyl-2-tetradecanoyl-sn-glycero-3-phosphate + CoA. The catalysed reaction is 1-(9Z-octadecenoyl)-sn-glycero-3-phosphate + hexadecanoyl-CoA = 1-(9Z)-octadecenoyl-2-hexadecanoyl-sn-glycero-3-phosphate + CoA. The enzyme catalyses 1-(9Z-octadecenoyl)-sn-glycero-3-phosphate + octadecanoyl-CoA = 1-(9Z-octadecenoyl)-2-octadecanoyl-sn-glycero-3-phosphate + CoA. It carries out the reaction 1-(9Z-octadecenoyl)-sn-glycero-3-phosphate + (9Z,12Z)-octadecadienoyl-CoA = 1-(9Z)-octadecenoyl-2-(9Z,12Z)-octadecadienoyl-sn-glycero-3-phosphate + CoA. It catalyses the reaction 1-(5Z,8Z,11Z,14Z-eicosatetraenoyl)-sn-glycero-3-phosphate + (9Z)-octadecenoyl-CoA = 1-(5Z,8Z,11Z,14Z)-eicosatetraenoyl-2-(9Z)-octadecenoyl-sn-glycero-3-phosphate + CoA. The protein operates within glycerolipid metabolism; triacylglycerol biosynthesis. It participates in phospholipid metabolism; CDP-diacylglycerol biosynthesis; CDP-diacylglycerol from sn-glycerol 3-phosphate: step 1/3. Its function is as follows. Converts glycerol-3-phosphate to 1-acyl-sn-glycerol-3-phosphate (lysophosphatidic acid or LPA) by incorporating an acyl moiety at the sn-1 position of the glycerol backbone. Also converts LPA into 1,2-diacyl-sn-glycerol-3-phosphate (phosphatidic acid or PA) by incorporating an acyl moiety at the sn-2 position of the glycerol backbone. Protects cells against lipotoxicity. This chain is Glycerol-3-phosphate acyltransferase 3, found in Mus musculus (Mouse).